The following is a 194-amino-acid chain: MVVSIECIPRTSFGRNSANVLRRSGFVPAVIYGKERENINVAISVRDVSKHFAVLSGSGVVELSCEGKVYKVVPKAYELHPVSSVVLHLDFVFAGEHASKFQVPLNFVNSGKSEAIRLGAMLNIVKRTVLVRCTAANLPKSIPVDIENAKVGDSIKFSDLVFPDGVVPLARDANSVVATVVGKKVKAGTVAATA.

This sequence belongs to the bacterial ribosomal protein bL25 family. CTC subfamily. As to quaternary structure, part of the 50S ribosomal subunit; part of the 5S rRNA/L5/L18/L25 subcomplex. Contacts the 5S rRNA. Binds to the 5S rRNA independently of L5 and L18.

This is one of the proteins that binds to the 5S RNA in the ribosome where it forms part of the central protuberance. In Neorickettsia sennetsu (strain ATCC VR-367 / Miyayama) (Ehrlichia sennetsu), this protein is Large ribosomal subunit protein bL25.